Consider the following 77-residue polypeptide: UPF0349 protein lwe2340 (77 aa).

It belongs to the UPF0349 family.

In Listeria welshimeri serovar 6b (strain ATCC 35897 / DSM 20650 / CCUG 15529 / CIP 8149 / NCTC 11857 / SLCC 5334 / V8), this protein is UPF0349 protein lwe2340.